The primary structure comprises 121 residues: Ragulator complex protein LAMTOR4 homolog (121 aa).

The disordered stretch occupies residues 91-121; it reads TQNGATTSSSSSTSYNDAAEGNNISSSTVLA. A compositionally biased stretch (polar residues) spans 112-121; the sequence is NNISSSTVLA.

This sequence belongs to the LAMTOR4 family. As to quaternary structure, part of the Ragulator complex.

It localises to the lysosome. Regulator of the TOR pathway, a signaling cascade that promotes cell growth in response to growth factors, energy levels, and amino acids. As part of the Ragulator complex, may activate the TOR signaling cascade in response to amino acids. In Drosophila pseudoobscura pseudoobscura (Fruit fly), this protein is Ragulator complex protein LAMTOR4 homolog.